We begin with the raw amino-acid sequence, 446 residues long: 5-hydroxytryptamine receptor (446 aa).

The Extracellular portion of the chain corresponds to 1–65; it reads MEGAEGQEEL…AALVRAAAKA (65 aa). N-linked (GlcNAc...) asparagine glycans are attached at residues N23, N27, N36, and N42. A helical membrane pass occupies residues 66 to 88; it reads VVLGLLILATVVGNVFVIAAILL. The Cytoplasmic portion of the chain corresponds to 89–98; it reads ERHLRSAANN. The helical transmembrane segment at 99–120 threads the bilayer; sequence LILSLAVADLLVACLVMPLGAV. Residues 121–135 lie on the Extracellular side of the membrane; that stretch reads YEVVQRWTLGPELCD. Cysteines 134 and 214 form a disulfide. The helical transmembrane segment at 136-157 threads the bilayer; it reads MWTSGDVLCCTASILHLVAIAL. Topologically, residues 158-176 are cytoplasmic; it reads DRYWAVTNIDYIHASTAKR. A helical membrane pass occupies residues 177–199; it reads VGMMIACVWTVSFFVCIAQLLGW. The Extracellular segment spans residues 200–227; the sequence is KDPDWNQRVSEDLRCVVSQDVGYQIFAT. The helical transmembrane segment at 228-249 threads the bilayer; sequence ASSFYVPVLIILILYWRIYQTA. The Cytoplasmic segment spans residues 250-367; sequence RKRIRRRRGA…SKRERKAAKT (118 aa). The segment covering 304-324 has biased composition (polar residues); it reads TTTGFTNVSSNNTSPEKQSCA. Residues 304 to 329 are disordered; that stretch reads TTTGFTNVSSNNTSPEKQSCANGLEA. Residues 368–391 traverse the membrane as a helical segment; that stretch reads LAIITGAFVACWLPFFVLAILVPT. The Extracellular segment spans residues 392–399; sequence CDCEVSPV. The chain crosses the membrane as a helical span at residues 400–422; the sequence is LTSLSLWLGYFNSTLNPVIYTVF. Residues 423–446 are Cytoplasmic-facing; the sequence is SPEFRHAFQRLLCGRRVRRRRAPQ.

The protein belongs to the G-protein coupled receptor 1 family.

Its subcellular location is the cell membrane. In terms of biological role, this is a receptor for 5-hydroxytryptamine (serotonin), a biogenic hormone that function as a neurotransmitter, a hormone, and a mitogen. The chain is 5-hydroxytryptamine receptor from Bombyx mori (Silk moth).